The chain runs to 232 residues: Ubiquinone biosynthesis O-methyltransferase (232 aa).

Residues Arg-36, Gly-55, Asp-76, and Met-120 each coordinate S-adenosyl-L-methionine.

This sequence belongs to the methyltransferase superfamily. UbiG/COQ3 family.

The enzyme catalyses a 3-demethylubiquinol + S-adenosyl-L-methionine = a ubiquinol + S-adenosyl-L-homocysteine + H(+). It catalyses the reaction a 3-(all-trans-polyprenyl)benzene-1,2-diol + S-adenosyl-L-methionine = a 2-methoxy-6-(all-trans-polyprenyl)phenol + S-adenosyl-L-homocysteine + H(+). It participates in cofactor biosynthesis; ubiquinone biosynthesis. Functionally, O-methyltransferase that catalyzes the 2 O-methylation steps in the ubiquinone biosynthetic pathway. The polypeptide is Ubiquinone biosynthesis O-methyltransferase (Burkholderia thailandensis (strain ATCC 700388 / DSM 13276 / CCUG 48851 / CIP 106301 / E264)).